Consider the following 235-residue polypeptide: DDCIVVEYYIVTDSAFTKRFKSNSALTNYVTVMFTGVQNLMDTLELGIGVRLLGVTTFTEKTEPSFIKDNLIPGPPAAFDPDVLISAMSKYYCNHQTGLAKDTDLIFLITARGMGDPREDGTVDINTAGIANSAGVCKPCFKSGIATDDSDYNERVDTLAHESVHLLGSPHDGEGPNLVSLEGSPGAANCPAKAGYIMGNRNDKNKYKFSPCTKKCVEYLLSKPTASCIFQQCRD.

The Peptidase M12B domain occupies 4 to 233; sequence IVVEYYIVTD…PTASCIFQQC (230 aa). Cys-137 and Cys-228 form a disulfide bridge. His-161 lines the Zn(2+) pocket. Glu-162 is an active-site residue. Residues His-165 and His-171 each coordinate Zn(2+).

The protein belongs to the venom metalloproteinase (M12B) family. Zn(2+) serves as cofactor. As to expression, expressed by the venom gland.

The protein resides in the secreted. Its activity is regulated as follows. Inhibited by EDTA. Functionally, acts as a metalloprotease. Penetrates intact tissue and specifically cleaves the vesicle-associated membrane protein 2 (VAMP2) (part of the SNARE complex) involved in pancreatic secretion, thus disrupting the normal vesicular traffic. In Tityus serrulatus (Brazilian scorpion), this protein is Venom metalloproteinase antarease-like TserMP_B.